The sequence spans 352 residues: Histidine biosynthesis bifunctional protein HisB (352 aa).

The histidinol-phosphatase stretch occupies residues 1 to 164; it reads MSQKILFIDR…EIENEILSSF (164 aa). Aspartate 9 (nucleophile) is an active-site residue. Residues aspartate 9 and aspartate 11 each coordinate Mg(2+). Residue aspartate 11 is the Proton donor of the active site. The Zn(2+) site is built by cysteine 93, histidine 95, cysteine 101, and cysteine 103. Mg(2+) is bound at residue aspartate 130. The tract at residues 165 to 352 is imidazoleglycerol-phosphate dehydratase; that stretch reads RSASYQRTTK…ENLASSKGVI (188 aa).

In the N-terminal section; belongs to the histidinol-phosphatase family. It in the C-terminal section; belongs to the imidazoleglycerol-phosphate dehydratase family. Mg(2+) serves as cofactor. It depends on Zn(2+) as a cofactor.

It is found in the cytoplasm. The catalysed reaction is D-erythro-1-(imidazol-4-yl)glycerol 3-phosphate = 3-(imidazol-4-yl)-2-oxopropyl phosphate + H2O. The enzyme catalyses L-histidinol phosphate + H2O = L-histidinol + phosphate. It functions in the pathway amino-acid biosynthesis; L-histidine biosynthesis; L-histidine from 5-phospho-alpha-D-ribose 1-diphosphate: step 6/9. The protein operates within amino-acid biosynthesis; L-histidine biosynthesis; L-histidine from 5-phospho-alpha-D-ribose 1-diphosphate: step 8/9. The polypeptide is Histidine biosynthesis bifunctional protein HisB (Campylobacter jejuni subsp. doylei (strain ATCC BAA-1458 / RM4099 / 269.97)).